The primary structure comprises 370 residues: 4-hydroxy-3-methylbut-2-en-1-yl diphosphate synthase (flavodoxin) (370 aa).

Cys270, Cys273, Cys305, and Glu312 together coordinate [4Fe-4S] cluster.

Belongs to the IspG family. It depends on [4Fe-4S] cluster as a cofactor.

It catalyses the reaction (2E)-4-hydroxy-3-methylbut-2-enyl diphosphate + oxidized [flavodoxin] + H2O + 2 H(+) = 2-C-methyl-D-erythritol 2,4-cyclic diphosphate + reduced [flavodoxin]. It functions in the pathway isoprenoid biosynthesis; isopentenyl diphosphate biosynthesis via DXP pathway; isopentenyl diphosphate from 1-deoxy-D-xylulose 5-phosphate: step 5/6. Converts 2C-methyl-D-erythritol 2,4-cyclodiphosphate (ME-2,4cPP) into 1-hydroxy-2-methyl-2-(E)-butenyl 4-diphosphate. The chain is 4-hydroxy-3-methylbut-2-en-1-yl diphosphate synthase (flavodoxin) from Hahella chejuensis (strain KCTC 2396).